The sequence spans 232 residues: 5'-methylthioadenosine/S-adenosylhomocysteine nucleosidase (232 aa).

E12 functions as the Proton acceptor in the catalytic mechanism. Residues G78, M153, and 174-175 (ME) each bind substrate. D198 acts as the Proton donor in catalysis.

Belongs to the PNP/UDP phosphorylase family. MtnN subfamily.

The enzyme catalyses S-adenosyl-L-homocysteine + H2O = S-(5-deoxy-D-ribos-5-yl)-L-homocysteine + adenine. The catalysed reaction is S-methyl-5'-thioadenosine + H2O = 5-(methylsulfanyl)-D-ribose + adenine. It catalyses the reaction 5'-deoxyadenosine + H2O = 5-deoxy-D-ribose + adenine. It participates in amino-acid biosynthesis; L-methionine biosynthesis via salvage pathway; S-methyl-5-thio-alpha-D-ribose 1-phosphate from S-methyl-5'-thioadenosine (hydrolase route): step 1/2. Catalyzes the irreversible cleavage of the glycosidic bond in both 5'-methylthioadenosine (MTA) and S-adenosylhomocysteine (SAH/AdoHcy) to adenine and the corresponding thioribose, 5'-methylthioribose and S-ribosylhomocysteine, respectively. Also cleaves 5'-deoxyadenosine, a toxic by-product of radical S-adenosylmethionine (SAM) enzymes, into 5-deoxyribose and adenine. The sequence is that of 5'-methylthioadenosine/S-adenosylhomocysteine nucleosidase from Hydrogenovibrio crunogenus (strain DSM 25203 / XCL-2) (Thiomicrospira crunogena).